A 398-amino-acid chain; its full sequence is Bifunctional enzyme IspD/IspF (398 aa).

The interval 1-234 is 2-C-methyl-D-erythritol 4-phosphate cytidylyltransferase; it reads MTNSPRTAAI…SRLMAALGDI (234 aa). Positions 235 to 398 are 2-C-methyl-D-erythritol 2,4-cyclodiphosphate synthase; sequence RTGTGYDVHA…LPWGADGLAG (164 aa). Residues D241 and H243 each coordinate a divalent metal cation. 4-CDP-2-C-methyl-D-erythritol 2-phosphate-binding positions include 241–243 and 267–268; these read DVH and HS. H275 contacts a divalent metal cation. Residues 289-291, 365-368, F372, and R375 each bind 4-CDP-2-C-methyl-D-erythritol 2-phosphate; these read DIG and TTSE.

It in the N-terminal section; belongs to the IspD/TarI cytidylyltransferase family. IspD subfamily. This sequence in the C-terminal section; belongs to the IspF family. Requires a divalent metal cation as cofactor.

It catalyses the reaction 2-C-methyl-D-erythritol 4-phosphate + CTP + H(+) = 4-CDP-2-C-methyl-D-erythritol + diphosphate. It carries out the reaction 4-CDP-2-C-methyl-D-erythritol 2-phosphate = 2-C-methyl-D-erythritol 2,4-cyclic diphosphate + CMP. The protein operates within isoprenoid biosynthesis; isopentenyl diphosphate biosynthesis via DXP pathway; isopentenyl diphosphate from 1-deoxy-D-xylulose 5-phosphate: step 2/6. Its pathway is isoprenoid biosynthesis; isopentenyl diphosphate biosynthesis via DXP pathway; isopentenyl diphosphate from 1-deoxy-D-xylulose 5-phosphate: step 4/6. Bifunctional enzyme that catalyzes the formation of 4-diphosphocytidyl-2-C-methyl-D-erythritol from CTP and 2-C-methyl-D-erythritol 4-phosphate (MEP) (IspD), and catalyzes the conversion of 4-diphosphocytidyl-2-C-methyl-D-erythritol 2-phosphate (CDP-ME2P) to 2-C-methyl-D-erythritol 2,4-cyclodiphosphate (ME-CPP) with a corresponding release of cytidine 5-monophosphate (CMP) (IspF). In Rhodopseudomonas palustris (strain ATCC BAA-98 / CGA009), this protein is Bifunctional enzyme IspD/IspF.